Consider the following 184-residue polypeptide: NADH-dependent flavin reductase subunit 2 (184 aa).

The protein belongs to the NADH-dependent flavin reductase family. Requires LJ_0548 for activity, but the exact composition of the enzyme is unclear.

The catalysed reaction is a reduced flavin + NAD(+) = an oxidized flavin + NADH + 2 H(+). Functionally, component of an enzyme that catalyzes the reduction of free flavins (FMN, FAD and riboflavin) by NADH; the reduced flavins produced by this reaction likely spontaneously react with oxygen, yielding hydrogen peroxide. Is responsible for the major H(2)O(2) production in L.johnsonii in the presence of oxygen. Cannot use NADPH instead of NADH as the electron donor. This chain is NADH-dependent flavin reductase subunit 2 (nfr2), found in Lactobacillus johnsonii (strain CNCM I-12250 / La1 / NCC 533).